The chain runs to 177 residues: Nucleoside triphosphate/diphosphate phosphatase (177 aa).

R23 functions as the Proton donor in the catalytic mechanism. 6 residues coordinate Mg(2+): N87, D103, D105, D107, D120, and E123.

It belongs to the Ntdp family. Mg(2+) serves as cofactor.

The catalysed reaction is a ribonucleoside 5'-triphosphate + H2O = a ribonucleoside 5'-diphosphate + phosphate + H(+). It carries out the reaction a ribonucleoside 5'-diphosphate + H2O = a ribonucleoside 5'-phosphate + phosphate + H(+). Has nucleoside phosphatase activity towards nucleoside triphosphates and nucleoside diphosphates. The protein is Nucleoside triphosphate/diphosphate phosphatase of Streptococcus suis (strain 98HAH33).